The chain runs to 227 residues: PKHD-type hydroxylase Veis_3084 (227 aa).

A disordered region spans residues Asp27–Glu51. Polar residues predominate over residues Ala33–Pro47. The 102-residue stretch at Arg78–Ser179 folds into the Fe2OG dioxygenase domain. Fe cation is bound by residues His97, Asp99, and His160. Arg170 contacts 2-oxoglutarate.

Fe(2+) is required as a cofactor. L-ascorbate serves as cofactor.

The polypeptide is PKHD-type hydroxylase Veis_3084 (Verminephrobacter eiseniae (strain EF01-2)).